We begin with the raw amino-acid sequence, 122 residues long: Large ribosomal subunit protein bL19 (122 aa).

Belongs to the bacterial ribosomal protein bL19 family.

In terms of biological role, this protein is located at the 30S-50S ribosomal subunit interface and may play a role in the structure and function of the aminoacyl-tRNA binding site. The polypeptide is Large ribosomal subunit protein bL19 (rplS) (Synechocystis sp. (strain ATCC 27184 / PCC 6803 / Kazusa)).